The primary structure comprises 160 residues: Cytochrome b6-f complex subunit 4 (160 aa).

Transmembrane regions (helical) follow at residues 36 to 56 (LLYI…GLAV), 95 to 115 (LLGV…PFLE), and 131 to 151 (TVFL…TLPI).

It belongs to the cytochrome b family. PetD subfamily. In terms of assembly, the 4 large subunits of the cytochrome b6-f complex are cytochrome b6, subunit IV (17 kDa polypeptide, petD), cytochrome f and the Rieske protein, while the 4 small subunits are petG, petL, petM and petN. The complex functions as a dimer.

Its subcellular location is the plastid. It is found in the chloroplast thylakoid membrane. Component of the cytochrome b6-f complex, which mediates electron transfer between photosystem II (PSII) and photosystem I (PSI), cyclic electron flow around PSI, and state transitions. In Oryza nivara (Indian wild rice), this protein is Cytochrome b6-f complex subunit 4.